A 431-amino-acid chain; its full sequence is tRNA(Ile)-lysidine synthase (431 aa).

25 to 30 contributes to the ATP binding site; it reads SGGPDS.

Belongs to the tRNA(Ile)-lysidine synthase family.

The protein localises to the cytoplasm. It carries out the reaction cytidine(34) in tRNA(Ile2) + L-lysine + ATP = lysidine(34) in tRNA(Ile2) + AMP + diphosphate + H(+). Its function is as follows. Ligates lysine onto the cytidine present at position 34 of the AUA codon-specific tRNA(Ile) that contains the anticodon CAU, in an ATP-dependent manner. Cytidine is converted to lysidine, thus changing the amino acid specificity of the tRNA from methionine to isoleucine. The protein is tRNA(Ile)-lysidine synthase of Lactobacillus johnsonii (strain CNCM I-12250 / La1 / NCC 533).